Here is a 482-residue protein sequence, read N- to C-terminus: Regulator of nonsense transcripts UPF3 (482 aa).

The tract at residues 9–14 is binds to UPF2; that stretch reads KVVVRH. A necessary for interaction with UPF2 region spans residues 9 to 219; sequence KVVVRHLPPS…EKESSKNVPR (211 aa). Residues 53 to 482 are sufficient for association with EJC core; that stretch reads YSRAYVSFKA…MWIQKPSSGT (430 aa). A disordered region spans residues 173–482; the sequence is PQGLSDIRRG…MWIQKPSSGT (310 aa). Over residues 201-214 the composition is skewed to basic and acidic residues; it reads RNSEKKKYVEKESS. Polar residues-rich tracts occupy residues 223-239, 292-308, and 325-336; these read ADVS…NSSG, DTNL…NQKS, and RPSQSSTFVQSE. Basic and acidic residues-rich tracts occupy residues 337–348 and 370–394; these read QRVEPSEAENYK and EKQE…RDGS. The segment covering 414–435 has biased composition (polar residues); that stretch reads SQRSGEVVNSSGGHTLENGSAR.

This sequence belongs to the RENT3 family. Found in a post-splicing messenger ribonucleoprotein (mRNP) complex. Associates with the exon junction complex (EJC). Interacts with CPL1/FRY2.

Its subcellular location is the nucleus. The protein localises to the nucleolus. It localises to the cytoplasm. In terms of biological role, recruits UPF2 at the cytoplasmic side of the nuclear envelope and the subsequent formation of an UPF1-UPF2-UPF3 surveillance complex (including UPF1 bound to release factors at the stalled ribosome) is believed to activate NMD. Binds spliced mRNA upstream of exon-exon junctions. Involved in nonsense-mediated decay (NMD) of mRNAs containing premature stop codons (premature termination codon PTC) by associating with the nuclear exon junction complex (EJC) and serving as link between the EJC core and NMD machinery. Eliminates the production of nonsense-containing RNAs (ncRNAs). Required for plant development and adaptation to environmental stresses, including plant defense and response to wounding. The sequence is that of Regulator of nonsense transcripts UPF3 from Arabidopsis thaliana (Mouse-ear cress).